The chain runs to 120 residues: Seripauperin-13 (120 aa).

Residues 1–25 form the signal peptide; the sequence is MVKLTSIAAGVAAIAATASATTTLA.

The protein belongs to the SRP1/TIP1 family. Seripauperin subfamily.

The protein is Seripauperin-13 (PAU13) of Saccharomyces cerevisiae (strain ATCC 204508 / S288c) (Baker's yeast).